The following is a 482-amino-acid chain: Ribosomal protein S6 kinase beta-2 (482 aa).

A disordered region spans residues 1-26 (MAAVFDLDLETEEGSEGEGEPELSPA). Residues 7–21 (LDLETEEGSEGEGEP) are compositionally biased toward acidic residues. At serine 15 the chain carries Phosphoserine. In terms of domain architecture, Protein kinase spans 67 to 328 (FELLRVLGKG…AADVQRHPFF (262 aa)). ATP-binding positions include 73 to 81 (LGKGGYGKV) and lysine 99. Catalysis depends on aspartate 194, which acts as the Proton acceptor. In terms of domain architecture, AGC-kinase C-terminal spans 329–399 (RHMNWDDLLA…VAPSVLDSIK (71 aa)). The interval 407–482 (KLRSPRRLNS…SKRGRGRPGR (76 aa)) is disordered. A phosphoserine mark is found at serine 417 and serine 423. Positions 437-466 (PSLPEPTELPLPPLLPPPPPSTTAPLPIRP) are enriched in pro residues. A Nuclear localization signal motif is present at residues 471 to 477 (KKSKRGR). Residues 471-482 (KKSKRGRGRPGR) are compositionally biased toward basic residues. A Phosphoserine; by PKC modification is found at serine 473.

The protein belongs to the protein kinase superfamily. AGC Ser/Thr protein kinase family. S6 kinase subfamily. Phosphorylated and activated by MTOR. Phosphorylation by PKC within the NLS in response to mitogenic stimuli causes cytoplasmic retention.

It is found in the cytoplasm. It localises to the nucleus. It catalyses the reaction L-seryl-[protein] + ATP = O-phospho-L-seryl-[protein] + ADP + H(+). The catalysed reaction is L-threonyl-[protein] + ATP = O-phospho-L-threonyl-[protein] + ADP + H(+). In terms of biological role, phosphorylates specifically ribosomal protein S6. Seems to act downstream of mTOR signaling in response to growth factors and nutrients to promote cell proliferation, cell growth and cell cycle progression in an alternative pathway regulated by MEAK7. The sequence is that of Ribosomal protein S6 kinase beta-2 (RPS6KB2) from Homo sapiens (Human).